Here is a 186-residue protein sequence, read N- to C-terminus: Peptidyl-tRNA hydrolase (186 aa).

Tyrosine 14 serves as a coordination point for tRNA. Histidine 19 serves as the catalytic Proton acceptor. Phenylalanine 65, asparagine 67, and asparagine 113 together coordinate tRNA.

The protein belongs to the PTH family. In terms of assembly, monomer.

Its subcellular location is the cytoplasm. The catalysed reaction is an N-acyl-L-alpha-aminoacyl-tRNA + H2O = an N-acyl-L-amino acid + a tRNA + H(+). Its function is as follows. Hydrolyzes ribosome-free peptidyl-tRNAs (with 1 or more amino acids incorporated), which drop off the ribosome during protein synthesis, or as a result of ribosome stalling. Functionally, catalyzes the release of premature peptidyl moieties from peptidyl-tRNA molecules trapped in stalled 50S ribosomal subunits, and thus maintains levels of free tRNAs and 50S ribosomes. In Limosilactobacillus reuteri (strain DSM 20016) (Lactobacillus reuteri), this protein is Peptidyl-tRNA hydrolase.